The chain runs to 397 residues: Vacuolar protein sorting-associated protein 37A (397 aa).

A Phosphoserine modification is found at serine 18. A VPS37 C-terminal domain is found at 308–397 (KSTFEKKMQR…AMHSQFHAPL (90 aa)).

The protein belongs to the VPS37 family. In terms of assembly, component of the ESCRT-I complex (endosomal sorting complex required for transport I) which consists of TSG101, VPS28, a VPS37 protein (VPS37A to -D) and MVB12A or MVB12B in a 1:1:1:1 stoichiometry. Interacts with TSG101, VPS28 and HGS. Component of an ESCRT-I complex (endosomal sorting complex required for transport I) which consists of TSG101, VPS28, VPS37A and UBAP1 in a 1:1:1:1 stoichiometry.

The protein localises to the late endosome membrane. It is found in the nucleus. In terms of biological role, component of the ESCRT-I complex, a regulator of vesicular trafficking process. Required for the sorting of endocytic ubiquitinated cargos into multivesicular bodies. May be involved in cell growth and differentiation. In Mus musculus (Mouse), this protein is Vacuolar protein sorting-associated protein 37A (Vps37a).